The following is a 396-amino-acid chain: S-adenosylmethionine synthase 2 (396 aa).

Glu-13 serves as a coordination point for Mg(2+). Position 19 (His-19) interacts with ATP. Glu-47 provides a ligand contact to K(+). 2 residues coordinate L-methionine: Glu-60 and Gln-103. ATP is bound by residues 171 to 173, 239 to 242, Asp-250, 256 to 257, Ala-273, Lys-277, and Lys-281; these read DGK, SGRF, and RK. Residue Asp-250 participates in L-methionine binding. An L-methionine-binding site is contributed by Lys-281.

This sequence belongs to the AdoMet synthase family. As to quaternary structure, homotetramer. Mn(2+) serves as cofactor. The cofactor is Mg(2+). Requires Co(2+) as cofactor. It depends on K(+) as a cofactor.

It localises to the cytoplasm. The catalysed reaction is L-methionine + ATP + H2O = S-adenosyl-L-methionine + phosphate + diphosphate. Its pathway is amino-acid biosynthesis; S-adenosyl-L-methionine biosynthesis; S-adenosyl-L-methionine from L-methionine: step 1/1. Catalyzes the formation of S-adenosylmethionine from methionine and ATP. The reaction comprises two steps that are both catalyzed by the same enzyme: formation of S-adenosylmethionine (AdoMet) and triphosphate, and subsequent hydrolysis of the triphosphate. The sequence is that of S-adenosylmethionine synthase 2 (SAM2) from Dianthus caryophyllus (Carnation).